The sequence spans 375 residues: Lipid-A-disaccharide synthase (375 aa).

It belongs to the LpxB family.

It carries out the reaction a lipid X + a UDP-2-N,3-O-bis[(3R)-3-hydroxyacyl]-alpha-D-glucosamine = a lipid A disaccharide + UDP + H(+). It functions in the pathway bacterial outer membrane biogenesis; LPS lipid A biosynthesis. Its function is as follows. Condensation of UDP-2,3-diacylglucosamine and 2,3-diacylglucosamine-1-phosphate to form lipid A disaccharide, a precursor of lipid A, a phosphorylated glycolipid that anchors the lipopolysaccharide to the outer membrane of the cell. In Pseudomonas putida (strain GB-1), this protein is Lipid-A-disaccharide synthase.